A 388-amino-acid chain; its full sequence is N5-carboxyaminoimidazole ribonucleotide synthase (388 aa).

Residues K105, K140, 174–177 (ESFV), E182, and 267–268 (NE) contribute to the ATP site. One can recognise an ATP-grasp domain in the interval 109–297 (RHFLQNLGLP…QFALQLQAVT (189 aa)).

It belongs to the PurK/PurT family. Homodimer.

It catalyses the reaction 5-amino-1-(5-phospho-beta-D-ribosyl)imidazole + hydrogencarbonate + ATP = 5-carboxyamino-1-(5-phospho-D-ribosyl)imidazole + ADP + phosphate + 2 H(+). Its pathway is purine metabolism; IMP biosynthesis via de novo pathway; 5-amino-1-(5-phospho-D-ribosyl)imidazole-4-carboxylate from 5-amino-1-(5-phospho-D-ribosyl)imidazole (N5-CAIR route): step 1/2. Its function is as follows. Catalyzes the ATP-dependent conversion of 5-aminoimidazole ribonucleotide (AIR) and HCO(3)(-) to N5-carboxyaminoimidazole ribonucleotide (N5-CAIR). This Synechocystis sp. (strain ATCC 27184 / PCC 6803 / Kazusa) protein is N5-carboxyaminoimidazole ribonucleotide synthase.